A 308-amino-acid polypeptide reads, in one-letter code: Peptidyl-prolyl cis-trans isomerase CYP8 (308 aa).

The region spanning 56–215 (FTDPESSEEA…QPITIGYISS (160 aa)) is the PPIase cyclophilin-type domain.

The enzyme catalyses [protein]-peptidylproline (omega=180) = [protein]-peptidylproline (omega=0). Its function is as follows. PPIases accelerate the folding of proteins. It catalyzes the cis-trans isomerization of proline imidic peptide bonds in oligopeptides. This is Peptidyl-prolyl cis-trans isomerase CYP8 (CPR8) from Saccharomyces cerevisiae (strain ATCC 204508 / S288c) (Baker's yeast).